The following is a 50-amino-acid chain: Large ribosomal subunit protein bL32c (50 aa).

The protein belongs to the bacterial ribosomal protein bL32 family.

Its subcellular location is the plastid. It localises to the chloroplast. This Lotus japonicus (Lotus corniculatus var. japonicus) protein is Large ribosomal subunit protein bL32c.